An 87-amino-acid chain; its full sequence is Cobalt transport protein CbiN (87 aa).

Helical transmembrane passes span 4–24 (LLLL…EWAG) and 58–78 (MLFS…LGYY).

Belongs to the CbiN family. Forms an energy-coupling factor (ECF) transporter complex composed of an ATP-binding protein (A component, CbiO), a transmembrane protein (T component, CbiQ) and 2 possible substrate-capture proteins (S components, CbiM and CbiN) of unknown stoichimetry.

Its subcellular location is the cell membrane. It participates in cofactor biosynthesis; adenosylcobalamin biosynthesis. Its function is as follows. Part of the energy-coupling factor (ECF) transporter complex CbiMNOQ involved in cobalt import. The polypeptide is Cobalt transport protein CbiN (Archaeoglobus fulgidus (strain ATCC 49558 / DSM 4304 / JCM 9628 / NBRC 100126 / VC-16)).